A 316-amino-acid chain; its full sequence is DNA-directed RNA polymerase subunit alpha (316 aa).

Residues 1-230 (MIEFEKPNIH…EHLAMFVDLT (230 aa)) are alpha N-terminal domain (alpha-NTD). The interval 247 to 316 (KEKMLEMTIE…DLGLSLRKED (70 aa)) is alpha C-terminal domain (alpha-CTD).

It belongs to the RNA polymerase alpha chain family. As to quaternary structure, homodimer. The RNAP catalytic core consists of 2 alpha, 1 beta, 1 beta' and 1 omega subunit. When a sigma factor is associated with the core the holoenzyme is formed, which can initiate transcription.

It catalyses the reaction RNA(n) + a ribonucleoside 5'-triphosphate = RNA(n+1) + diphosphate. Functionally, DNA-dependent RNA polymerase catalyzes the transcription of DNA into RNA using the four ribonucleoside triphosphates as substrates. The protein is DNA-directed RNA polymerase subunit alpha of Levilactobacillus brevis (strain ATCC 367 / BCRC 12310 / CIP 105137 / JCM 1170 / LMG 11437 / NCIMB 947 / NCTC 947) (Lactobacillus brevis).